A 524-amino-acid chain; its full sequence is Probable cytochrome P450 12c1, mitochondrial (524 aa).

Cysteine 470 contributes to the heme binding site.

The protein belongs to the cytochrome P450 family. Heme serves as cofactor.

It localises to the mitochondrion membrane. This chain is Probable cytochrome P450 12c1, mitochondrial (Cyp12c1), found in Drosophila melanogaster (Fruit fly).